Here is a 6995-residue protein sequence, read N- to C-terminus: Fibrous sheath-interacting protein 2 (6995 aa).

Disordered stretches follow at residues 273–292 (EQKI…RKKQ), 308–336 (DTGL…SSKK), and 351–476 (GDQK…TDAP). Residues 359–396 (TSGQVSATVNQSQSSSKDVTKVSASSVTYPAEVQNSSS) show a composition bias toward polar residues. A compositionally biased stretch (basic and acidic residues) spans 397-421 (EQKRSEVTKRLSDERGKNSTDDSAR). A compositionally biased stretch (polar residues) spans 424–442 (IISTQLSPTRNAKLSQISL). A Phosphoserine modification is found at Ser-430. Over residues 443–452 (DHQKEEKEMK) the composition is skewed to basic and acidic residues. The segment covering 453–463 (STWNGGLSKKS) has biased composition (polar residues). Residues 665 to 692 (LEISLLYDKKAKAMDQIKNLKNVFVNFK) adopt a coiled-coil conformation. Disordered stretches follow at residues 1452–1472 (PDPQ…DPPT), 2554–2595 (KSKR…VPQM), 2699–2731 (TKTK…TPQV), 3182–3270 (PVKM…PNFT), 5489–5665 (GPSA…KYKG), 5719–5740 (SKSS…MTEK), 5823–5878 (KDLS…SKSK), 5943–5996 (KEDE…PDKL), and 6973–6995 (SKVF…QDKR). Residues 2555-2565 (SKREGEMHDSS) show a composition bias toward basic and acidic residues. Polar residues predominate over residues 3187–3204 (PSNTSDTPRTRRSSQGSV). Residues 3220-3231 (SVTSNSSSHISS) are compositionally biased toward low complexity. The segment covering 3232 to 3250 (CVENTNKSLEPMGRSNSEA) has biased composition (polar residues). A compositionally biased stretch (basic residues) spans 3255-3265 (SRHKAHDHGQR). Positions 5496–5509 (DAKKEDESKVKPAT) are enriched in basic and acidic residues. Composition is skewed to polar residues over residues 5523–5557 (MKSQ…SPPT), 5565–5625 (QVQQ…QSAM), and 5638–5650 (VQES…TTMK). Composition is skewed to basic and acidic residues over residues 5719–5738 (SKSS…ETMT) and 5829–5877 (GHRD…ESKS). Residues 5982 to 5993 (SDVQKTPEQSSP) are compositionally biased toward polar residues. Low complexity predominate over residues 6977-6995 (SRSSGSIPKSSSPPHQDKR).

In terms of assembly, may interact with AKAP4. As to expression, predominantly expressed in testis.

Its function is as follows. Plays a role in spermatogenesis. This chain is Fibrous sheath-interacting protein 2 (Fsip2), found in Mus musculus (Mouse).